Reading from the N-terminus, the 106-residue chain is Iron-sulfur cluster assembly protein CyaY (106 aa).

It belongs to the frataxin family.

Involved in iron-sulfur (Fe-S) cluster assembly. May act as a regulator of Fe-S biogenesis. The polypeptide is Iron-sulfur cluster assembly protein CyaY (Salmonella paratyphi B (strain ATCC BAA-1250 / SPB7)).